Here is a 361-residue protein sequence, read N- to C-terminus: Protein Csal_2339 (361 aa).

Residue Ser-91 is the Proton acceptor of the active site. Substrate is bound by residues 92–93 (GS) and 259–260 (GT).

The protein belongs to the proline racemase family.

The catalysed reaction is trans-4-hydroxy-L-proline = cis-4-hydroxy-D-proline. In terms of biological role, in vitro, catalyzes the epimerization of trans-4-hydroxy-L-proline (t4LHyp) to cis-4-hydroxy-D-proline (c4DHyp), albeit with very low efficiency. The physiological substrate may be different. Displays neither proline racemase activity nor t3LHyp dehydratase activity. This chain is Protein Csal_2339, found in Chromohalobacter salexigens (strain ATCC BAA-138 / DSM 3043 / CIP 106854 / NCIMB 13768 / 1H11).